The chain runs to 450 residues: MTHVRFDYSRALPFFKEQELTYLRDFVKVAHHTIHEKTGAGSDFLGWVDLPTDYDKEEFARIKKCAEKIQNDSDVLLVVGIGGSYLGARAAIEMLNHSFYNVLPKEKRKTPQVIFIGNNISSSYMRDVMDLLEDADFSINVISKSGTTTEPAIAFRIFRKLLEEKYGKEEAKRRIYATTDKERGALKTLANEEGFESFIIPDDVGGRFSVLTAVGLLPIAVSGADIDEMMKGARDASKDFSTSELEDNPAYQYAVVRNVLYNKGKTIEMLINYEPGLQYFAEWWKQLFGESEGKDEKGIYPSSANFSTDLHSLGQYVQEGRRDMFETVLNVEKPRHELTIEEADNDLDGLNYLAGKTVDFVNKKAFQGTMLAHTDGNVPNLIVNVPEMNAYTFGYLVYFFEKACAMSGYLLGVNPFDQPGVEAYKVNMFALLGKPGFEEKKAELEKRLNQ.

T38 carries the post-translational modification Phosphothreonine. Catalysis depends on E290, which acts as the Proton donor. Residues H311 and K425 contribute to the active site.

It belongs to the GPI family.

The protein resides in the cytoplasm. It carries out the reaction alpha-D-glucose 6-phosphate = beta-D-fructose 6-phosphate. Its pathway is carbohydrate biosynthesis; gluconeogenesis. It participates in carbohydrate degradation; glycolysis; D-glyceraldehyde 3-phosphate and glycerone phosphate from D-glucose: step 2/4. Catalyzes the reversible isomerization of glucose-6-phosphate to fructose-6-phosphate. The polypeptide is Glucose-6-phosphate isomerase (Bacillus licheniformis (strain ATCC 14580 / DSM 13 / JCM 2505 / CCUG 7422 / NBRC 12200 / NCIMB 9375 / NCTC 10341 / NRRL NRS-1264 / Gibson 46)).